A 470-amino-acid chain; its full sequence is Mucin-like protein 3 (470 aa).

A signal peptide spans 1 to 29 (MAQMTSGLYPMFGFFICLLFLPASWEAGA). Residues 30-401 (NTFQELQKTG…EGSNSFPAWA (372 aa)) lie on the Extracellular side of the membrane. Disordered regions lie at residues 57–234 (RALS…HTIP) and 248–318 (TKEA…KAPE). The segment covering 75–87 (STATQKPKRQCNT) has biased composition (polar residues). N-linked (GlcNAc...) asparagine glycosylation is present at Asn-122. Residues 132–152 (ARNERSADDHGSTNSEKRSDG) show a composition bias toward basic and acidic residues. A compositionally biased stretch (polar residues) spans 169–193 (TRTSGTPVSSTETSTKLRTTSQKPE). Over residues 194 to 203 (TSSHDSDLIR) the composition is skewed to basic and acidic residues. A compositionally biased stretch (polar residues) spans 204–222 (KSTSLPVKSTEVSRTSYRT). Residues 260–273 (KYERETRSASERIS) show a composition bias toward basic and acidic residues. A compositionally biased stretch (polar residues) spans 283–295 (HTPSAGETTTQVS). N-linked (GlcNAc...) asparagine glycosylation occurs at Asn-325. A helical transmembrane segment spans residues 402-422 (IVVVILMAVIILLIFLGLIFL). Topologically, residues 423–470 (VSCASRARHQLTQNSEDAEPEDKGGRNSYPVYLMEQQNLNLNQISSPP) are cytoplasmic.

The protein localises to the cell membrane. It localises to the cytoplasm. Its function is as follows. May modulate NF-kappaB signaling and play a role in cell growth. The polypeptide is Mucin-like protein 3 (Rattus norvegicus (Rat)).